Reading from the N-terminus, the 179-residue chain is Large ribosomal subunit protein uL5 (179 aa).

The protein belongs to the universal ribosomal protein uL5 family. As to quaternary structure, part of the 50S ribosomal subunit; part of the 5S rRNA/L5/L18/L25 subcomplex. Contacts the 5S rRNA and the P site tRNA. Forms a bridge to the 30S subunit in the 70S ribosome.

This is one of the proteins that bind and probably mediate the attachment of the 5S RNA into the large ribosomal subunit, where it forms part of the central protuberance. In the 70S ribosome it contacts protein S13 of the 30S subunit (bridge B1b), connecting the 2 subunits; this bridge is implicated in subunit movement. Contacts the P site tRNA; the 5S rRNA and some of its associated proteins might help stabilize positioning of ribosome-bound tRNAs. In Enterobacter sp. (strain 638), this protein is Large ribosomal subunit protein uL5.